A 211-amino-acid chain; its full sequence is MADS-box protein AGL72 (211 aa).

The region spanning 1–61 (MVRGKIEIKK…GRLYEFASSD (61 aa)) is the MADS-box domain. Positions 88-187 (VQGLKKEMVT…LCQVGERPMG (100 aa)) constitute a K-box domain.

The protein resides in the nucleus. Its function is as follows. MADS-box transcription factor that acts with AGL42 and AGL71 in the control of flowering time. Promotes flowering at the shoot apical and axillary meristems. Seems to act through a gibberellin-dependent pathway. Interacts genetically with SOC1 and its expression is directly regulated by SOC1. In Arabidopsis thaliana (Mouse-ear cress), this protein is MADS-box protein AGL72 (AGL72).